A 178-amino-acid chain; its full sequence is Killin (178 aa).

The DNA-binding element occupies 8 to 50; that stretch reads SARPGRTVHVWGYRVEWKVRNGRKLQPSEWAGRGDLGGFKRRW.

It is found in the nucleus. In terms of biological role, DNA-binding protein involved in S phase checkpoint control-coupled apoptosis by mediating p53/TP53-induced apoptosis. Has the ability to inhibit DNA synthesis and S phase arrest coupled to apoptosis. Has affinity to both double- and single-stranded DNA. The chain is Killin (KLLN) from Homo sapiens (Human).